Reading from the N-terminus, the 645-residue chain is 1,4-alpha-glucan branching enzyme GlgB (645 aa).

Residue Asp309 is the Nucleophile of the active site. Glu352 (proton donor) is an active-site residue. The tract at residues 619–645 (VKTRKGSKKQDGSKTKVRSNVTSRGKR) is disordered. Over residues 636–645 (RSNVTSRGKR) the composition is skewed to polar residues.

It belongs to the glycosyl hydrolase 13 family. GlgB subfamily. Monomer.

It carries out the reaction Transfers a segment of a (1-&gt;4)-alpha-D-glucan chain to a primary hydroxy group in a similar glucan chain.. It participates in glycan biosynthesis; glycogen biosynthesis. Functionally, catalyzes the formation of the alpha-1,6-glucosidic linkages in glycogen by scission of a 1,4-alpha-linked oligosaccharide from growing alpha-1,4-glucan chains and the subsequent attachment of the oligosaccharide to the alpha-1,6 position. The chain is 1,4-alpha-glucan branching enzyme GlgB from Bacillus cereus (strain AH187).